The primary structure comprises 556 residues: Arginine--tRNA ligase (556 aa).

The 'HIGH' region signature appears at 130–140 (ANPTGPIHLGG).

This sequence belongs to the class-I aminoacyl-tRNA synthetase family. As to quaternary structure, monomer.

The protein resides in the cytoplasm. It carries out the reaction tRNA(Arg) + L-arginine + ATP = L-arginyl-tRNA(Arg) + AMP + diphosphate. The chain is Arginine--tRNA ligase from Corynebacterium jeikeium (strain K411).